Here is a 91-residue protein sequence, read N- to C-terminus: Mercuric transport protein periplasmic component (91 aa).

Positions methionine 1 to alanine 19 are cleaved as a signal peptide. An HMA domain is found at glutamine 22–serine 88. Positions 33 and 36 each coordinate Hg(2+).

It belongs to the MerP family. As to quaternary structure, monomer.

The protein resides in the periplasm. Functionally, involved in mercury resistance. Acts as a mercury scavenger that specifically binds to a mercuric ion in the periplasm and probably passes it to the cytoplasmic mercuric reductase MerA via the mercuric transport protein MerT. This is Mercuric transport protein periplasmic component from Pseudomonas fluorescens.